The following is an 85-amino-acid chain: Follicular dendritic cell secreted peptide (85 aa).

An N-terminal signal peptide occupies residues 1 to 17; the sequence is MKKVLLLITAILAVAVG. The O-glycosylated at one site stretch occupies residues 75–83; that stretch reads SAPTTPLPS.

In terms of processing, O-glycosylated with core 1 or possibly core 8 glycans. In terms of tissue distribution, abundantly expressed in tonsil, lymph node, and trachea; strong expression in prostate; lower expression in thyroid, stomach, and colon.

The protein resides in the secreted. Can bind to the surface of B-lymphoma cells, but not T-lymphoma cells, consistent with a function as a secreted mediator acting upon B-cells. In Homo sapiens (Human), this protein is Follicular dendritic cell secreted peptide (FDCSP).